The chain runs to 719 residues: Fatty acid oxidation complex subunit alpha (719 aa).

An enoyl-CoA hydratase/isomerase region spans residues 1 to 190; that stretch reads MVYQGNRITV…KLGLVDATVA (190 aa). Substrate is bound at residue D298. Positions 313 to 719 are 3-hydroxyacyl-CoA dehydrogenase; that stretch reads HEINEAAVLG…AAGETFYATA (407 aa). NAD(+) contacts are provided by residues M326, D345, 402 to 404, K409, and S431; that span reads VVE. Catalysis depends on H452, which acts as the For 3-hydroxyacyl-CoA dehydrogenase activity. Residue N455 coordinates NAD(+). N502 serves as a coordination point for substrate.

It in the N-terminal section; belongs to the enoyl-CoA hydratase/isomerase family. In the C-terminal section; belongs to the 3-hydroxyacyl-CoA dehydrogenase family. As to quaternary structure, heterotetramer of two alpha chains (FadB) and two beta chains (FadA).

The enzyme catalyses a (3S)-3-hydroxyacyl-CoA + NAD(+) = a 3-oxoacyl-CoA + NADH + H(+). The catalysed reaction is a (3S)-3-hydroxyacyl-CoA = a (2E)-enoyl-CoA + H2O. It carries out the reaction a 4-saturated-(3S)-3-hydroxyacyl-CoA = a (3E)-enoyl-CoA + H2O. It catalyses the reaction (3S)-3-hydroxybutanoyl-CoA = (3R)-3-hydroxybutanoyl-CoA. The enzyme catalyses a (3Z)-enoyl-CoA = a 4-saturated (2E)-enoyl-CoA. The catalysed reaction is a (3E)-enoyl-CoA = a 4-saturated (2E)-enoyl-CoA. The protein operates within lipid metabolism; fatty acid beta-oxidation. Functionally, involved in the aerobic and anaerobic degradation of long-chain fatty acids via beta-oxidation cycle. Catalyzes the formation of 3-oxoacyl-CoA from enoyl-CoA via L-3-hydroxyacyl-CoA. It can also use D-3-hydroxyacyl-CoA and cis-3-enoyl-CoA as substrate. In Psychrobacter arcticus (strain DSM 17307 / VKM B-2377 / 273-4), this protein is Fatty acid oxidation complex subunit alpha.